Here is a 204-residue protein sequence, read N- to C-terminus: Outer-membrane lipoprotein carrier protein (204 aa).

Positions 1 to 21 (MKKYLNLTALLLVGISNVTWA) are cleaved as a signal peptide.

This sequence belongs to the LolA family. As to quaternary structure, monomer.

Its subcellular location is the periplasm. Its function is as follows. Participates in the translocation of lipoproteins from the inner membrane to the outer membrane. Only forms a complex with a lipoprotein if the residue after the N-terminal Cys is not an aspartate (The Asp acts as a targeting signal to indicate that the lipoprotein should stay in the inner membrane). The sequence is that of Outer-membrane lipoprotein carrier protein from Histophilus somni (strain 2336) (Haemophilus somnus).